The chain runs to 346 residues: MRVAVDAMGGDNAPGVEVEGAVAAAREFGIAITLVGDTEKVNCELAKHNCKDLDITVKHASEVVGMHDSASDAVRKKKDSSIRIAFELVKNNEADAVVSAGNSGATMAAGMFVLKRIKGIDRPAIAQIFPTLRGKTLVLDVGGNVDCKPLNLVQFAIMGEVYARSVMDVENPKIGVLSNGEEESKGNDLTRESSTLLKSTSLDYMGYVEGRDIFNGMVDVVVCDGFVGNVVLKLSEGLAEAVSTMLKEEIKQSLLYKIGYILSRRAFINFKKKVDYTEYGGAPLLGIDGVGMICHGGSNAKAIKNAIRFAHEYARKGVNQHMVEKLQENYPLYMQQLETLKAQAAG.

The protein belongs to the PlsX family. In terms of assembly, homodimer. Probably interacts with PlsY.

Its subcellular location is the cytoplasm. It catalyses the reaction a fatty acyl-[ACP] + phosphate = an acyl phosphate + holo-[ACP]. Its pathway is lipid metabolism; phospholipid metabolism. In terms of biological role, catalyzes the reversible formation of acyl-phosphate (acyl-PO(4)) from acyl-[acyl-carrier-protein] (acyl-ACP). This enzyme utilizes acyl-ACP as fatty acyl donor, but not acyl-CoA. In Geotalea daltonii (strain DSM 22248 / JCM 15807 / FRC-32) (Geobacter daltonii), this protein is Phosphate acyltransferase.